Consider the following 386-residue polypeptide: Signal transduction histidine-protein kinase/phosphatase DegS (386 aa).

In terms of domain architecture, Histidine kinase spans Lys-188–Thr-384. Phosphohistidine; by autocatalysis is present on His-194.

Autophosphorylated.

It localises to the cytoplasm. The enzyme catalyses ATP + protein L-histidine = ADP + protein N-phospho-L-histidine.. In terms of biological role, member of the two-component regulatory system DegS/DegU, which plays an important role in the transition growth phase. Acts as both a protein kinase that undergoes autophosphorylation and subsequently transfers the phosphate to DegU, and a protein phosphatase that dephosphorylates phospho-DegU. This Brevibacillus brevis (Bacillus brevis) protein is Signal transduction histidine-protein kinase/phosphatase DegS (degS).